Here is a 241-residue protein sequence, read N- to C-terminus: ATP synthase subunit a (241 aa).

The next 6 helical transmembrane spans lie at 19–39 (AVLI…AKMA), 80–100 (LVAA…IPGF), 106–126 (NINV…YEGI), 135–155 (FAHF…IEIV), 177–197 (LFLW…AYLL), and 203–223 (LLQT…AVAI).

Belongs to the ATPase A chain family. In terms of assembly, F-type ATPases have 2 components, CF(1) - the catalytic core - and CF(0) - the membrane proton channel. CF(1) has five subunits: alpha(3), beta(3), gamma(1), delta(1), epsilon(1). CF(0) has three main subunits: a(1), b(2) and c(9-12). The alpha and beta chains form an alternating ring which encloses part of the gamma chain. CF(1) is attached to CF(0) by a central stalk formed by the gamma and epsilon chains, while a peripheral stalk is formed by the delta and b chains.

It is found in the cell inner membrane. Key component of the proton channel; it plays a direct role in the translocation of protons across the membrane. The sequence is that of ATP synthase subunit a from Sulfurovum sp. (strain NBC37-1).